The following is a 285-amino-acid chain: Protoheme IX farnesyltransferase (285 aa).

Transmembrane regions (helical) follow at residues 19 to 39, 40 to 60, 90 to 110, 111 to 131, 135 to 155, 165 to 185, 220 to 240, and 265 to 285; these read RIIWLLDLAALSGAFLSGKLM, PLSILAVLVGGTFASAGSMII, AIYVGIALLTLGTLVGLLDNP, LTSFFILLGGLVYVLVYTVWL, SPLNIVIGGLAGSAAAWAGYA, SILLGLLIFMWTPGHFWALAL, IPFALALYLYAGVIYGIVAGI, and FKFSSPYLAILLILIILTRLI.

The protein belongs to the UbiA prenyltransferase family. Protoheme IX farnesyltransferase subfamily.

Its subcellular location is the cell membrane. The enzyme catalyses heme b + (2E,6E)-farnesyl diphosphate + H2O = Fe(II)-heme o + diphosphate. The protein operates within porphyrin-containing compound metabolism; heme O biosynthesis; heme O from protoheme: step 1/1. Converts heme B (protoheme IX) to heme O by substitution of the vinyl group on carbon 2 of heme B porphyrin ring with a hydroxyethyl farnesyl side group. This chain is Protoheme IX farnesyltransferase, found in Metallosphaera sedula (strain ATCC 51363 / DSM 5348 / JCM 9185 / NBRC 15509 / TH2).